The following is a 257-amino-acid chain: uncharacterized protein (257 aa).

A helical transmembrane segment spans residues 6–26 (IFWLNLAAIIIISIVVSGGMF).

The protein belongs to the staphylococcal tandem lipoprotein family.

The protein localises to the cell membrane. This is an uncharacterized protein from Staphylococcus aureus (strain MSSA476).